The sequence spans 328 residues: tRNA dimethylallyltransferase (328 aa).

Position 10-17 (10-17 (GPTASGKT)) interacts with ATP. 12–17 (TASGKT) serves as a coordination point for substrate.

It belongs to the IPP transferase family. As to quaternary structure, monomer. Mg(2+) is required as a cofactor.

The catalysed reaction is adenosine(37) in tRNA + dimethylallyl diphosphate = N(6)-dimethylallyladenosine(37) in tRNA + diphosphate. Its function is as follows. Catalyzes the transfer of a dimethylallyl group onto the adenine at position 37 in tRNAs that read codons beginning with uridine, leading to the formation of N6-(dimethylallyl)adenosine (i(6)A). The protein is tRNA dimethylallyltransferase of Bifidobacterium longum (strain NCC 2705).